The sequence spans 382 residues: Putative oxidoreductase C1F5.03c (382 aa).

The helical transmembrane segment at 7–27 (IVIVGGGITGVSCLYFLAHHP) threads the bilayer.

Belongs to the TDA3 family.

Its subcellular location is the cytoplasm. It localises to the membrane. In terms of biological role, putative oxidoreductase that negatively regulates the retrieval of cargo from late endosomes to the Golgi. This chain is Putative oxidoreductase C1F5.03c, found in Schizosaccharomyces pombe (strain 972 / ATCC 24843) (Fission yeast).